Consider the following 1364-residue polypeptide: Serine protease EatA (1364 aa).

The signal sequence occupies residues 1–56 (MNKVFSLKYSFLAKGFIAVSELARRVSVKGKLKSASSIIISPITIAIVSYAPPSLA). The Peptidase S6 domain maps to 57 to 307 (ATVNADISYQ…VVTTQDFLHQ (251 aa)). Active-site charge relay system residues include histidine 134, aspartate 162, and serine 267. One can recognise an Autotransporter domain in the interval 1098-1364 (DSQGDAGGWA…SINANFRYYF (267 aa)).

Cleaved to release the mature protein from the outer membrane.

Its subcellular location is the periplasm. It is found in the secreted. The protein resides in the cell surface. It localises to the cell outer membrane. Inhibited by phenylmethylsulfonyl fluoride. Functionally, autotransporter serine protease probably involved in virulence. The sequence is that of Serine protease EatA (eatA) from Escherichia coli O78:H11 (strain H10407 / ETEC).